Here is a 156-residue protein sequence, read N- to C-terminus: Putative pre-16S rRNA nuclease (156 aa).

Belongs to the YqgF nuclease family.

The protein localises to the cytoplasm. In terms of biological role, could be a nuclease involved in processing of the 5'-end of pre-16S rRNA. The chain is Putative pre-16S rRNA nuclease from Streptomyces avermitilis (strain ATCC 31267 / DSM 46492 / JCM 5070 / NBRC 14893 / NCIMB 12804 / NRRL 8165 / MA-4680).